The following is a 112-amino-acid chain: Probable small nuclear ribonucleoprotein Sm D2 (112 aa).

Over residues 1–15 (MSRMNDETMEDKPDD) the composition is skewed to basic and acidic residues. The tract at residues 1 to 23 (MSRMNDETMEDKPDDSNGPLSIL) is disordered. The Sm domain occupies 20 to 106 (LSILMDSVNN…VILVLKNPLG (87 aa)).

Belongs to the snRNP core protein family.

Its subcellular location is the nucleus. The protein resides in the cytoplasm. The protein localises to the cytosol. Its function is as follows. Plays a role in pre-mRNA splicing as a core component of the spliceosomal U1, U2, U4 and U5 small nuclear ribonucleoproteins (snRNPs), the building blocks of the spliceosome. The polypeptide is Probable small nuclear ribonucleoprotein Sm D2 (snrpd2) (Dictyostelium discoideum (Social amoeba)).